Reading from the N-terminus, the 64-residue chain is Arasin 1 (64 aa).

An N-terminal signal peptide occupies residues 1–25 (MERRTLLVVLLVCSCVVAAAAEASP). Residues 22 to 43 (EASPSRWPSPGRPRPFPGRPKP) are disordered. The segment at 26–48 (SRWPSPGRPRPFPGRPKPIFRPR) is pro/Arg-rich region responsible for antibacterial and antifungal activity. Pro residues predominate over residues 31-43 (PGRPRPFPGRPKP). The interval 49–62 (PCNCYAPPCPCDRW) is cystein-containing C-terminal region important for stability but not essential for antimicrobial activity. Disulfide bonds link cysteine 50-cysteine 59 and cysteine 52-cysteine 57. A propeptide spanning residues 63–64 (RH) is cleaved from the precursor.

Interacts with chitin through the N-terminal region (26-48). This interaction may be important, since chitin is a component of the fungal cell wall, as well as of the crab exoskeleton (permitting a possible action of arasin in wound healing in case of lesions). In terms of processing, disulfide bonds are important for activity especially against Gram-negative bacteria, since the linearization of the peptide causes a strong decrease of activity on these bacteria. As to expression, mainly expressed in hemocytes. No or very low expression in heart, gills, inestines, and epidermis.

Functionally, antimicrobial peptide that has a large activity spectrum with activity against Gram-positive, Gram-negative bacteria, as well as against fungi. Shows activity at micromolar concentrations. Displays minimal inhibitory concentration (MIC) values lower than minimal bactericidal concentrations (MBC). Synthetic peptides with similar activities than the full length peptide (composed of the first 23 or 25 amino acids (Arasin 1(26-48) or Arasin 1(26-50))) may have a dual mode of action depending on the peptide concentrations. At MIC concentrations, the peptide penetrates into the cytoplasm of target cells (tested on the Gram-negative E.coli). The two inner membrane proteins YgdD and SbmA may be required for this uptake. At concentrations higher than MIC, arasin may act by disrupting membranes. Full-length and N-terminal peptides do not show hemolytic activity. In Hyas araneus (Atlantic lyre crab), this protein is Arasin 1.